Consider the following 277-residue polypeptide: Pantothenate synthetase (277 aa).

26-33 (MGNLHEGH) serves as a coordination point for ATP. Histidine 33 functions as the Proton donor in the catalytic mechanism. (R)-pantoate is bound at residue glutamine 57. Beta-alanine is bound at residue glutamine 57. 144 to 147 (GKKD) is a binding site for ATP. Glutamine 150 contributes to the (R)-pantoate binding site. ATP is bound by residues valine 173 and 181 to 184 (LSSR).

The protein belongs to the pantothenate synthetase family. In terms of assembly, homodimer.

The protein localises to the cytoplasm. The enzyme catalyses (R)-pantoate + beta-alanine + ATP = (R)-pantothenate + AMP + diphosphate + H(+). It participates in cofactor biosynthesis; (R)-pantothenate biosynthesis; (R)-pantothenate from (R)-pantoate and beta-alanine: step 1/1. In terms of biological role, catalyzes the condensation of pantoate with beta-alanine in an ATP-dependent reaction via a pantoyl-adenylate intermediate. The polypeptide is Pantothenate synthetase (Paraburkholderia phymatum (strain DSM 17167 / CIP 108236 / LMG 21445 / STM815) (Burkholderia phymatum)).